A 476-amino-acid chain; its full sequence is Ribosomal protein uS12 methylthiotransferase RimO (476 aa).

The 117-residue stretch at Lys7–Ser123 folds into the MTTase N-terminal domain. [4Fe-4S] cluster contacts are provided by Cys16, Cys52, Cys86, Cys158, Cys162, and Cys165. A Radical SAM core domain is found at Ser144–Glu373. The 69-residue stretch at Lys376–Glu444 folds into the TRAM domain. The span at Arg445–His459 shows a compositional bias: basic and acidic residues. The tract at residues Arg445 to Glu476 is disordered.

It belongs to the methylthiotransferase family. RimO subfamily. Requires [4Fe-4S] cluster as cofactor.

It is found in the cytoplasm. The catalysed reaction is L-aspartate(89)-[ribosomal protein uS12]-hydrogen + (sulfur carrier)-SH + AH2 + 2 S-adenosyl-L-methionine = 3-methylsulfanyl-L-aspartate(89)-[ribosomal protein uS12]-hydrogen + (sulfur carrier)-H + 5'-deoxyadenosine + L-methionine + A + S-adenosyl-L-homocysteine + 2 H(+). Catalyzes the methylthiolation of an aspartic acid residue of ribosomal protein uS12. The protein is Ribosomal protein uS12 methylthiotransferase RimO of Myxococcus xanthus (strain DK1622).